Consider the following 345-residue polypeptide: Microtubule-associated protein Jupiter (345 aa).

A compositionally biased stretch (polar residues) spans 1–14 (MISNFDCTDNQASS). Positions 1–34 (MISNFDCTDNQASSKVLRPPGGGSSDIFGSEMPQ) are disordered. Residue serine 24 is modified to Phosphoserine. Threonine 35 is subject to Phosphothreonine. Residues 78-87 (QKTVDSHNRL) are compositionally biased toward basic and acidic residues. The segment at 78–100 (QKTVDSHNRLFGEPTRPITPGKN) is disordered. A phosphothreonine mark is found at threonine 92 and threonine 96. 3 positions are modified to phosphoserine: serine 105, serine 134, and serine 145. Disordered regions lie at residues 127-241 (HYNG…QPHS) and 300-345 (EGNP…SGLW). Over residues 132-145 (SGSVSSASSSVSSS) the composition is skewed to low complexity. Polar residues predominate over residues 146 to 164 (TENLKMNSGSRSVFRNMST). The span at 177-191 (LCPPSPVRIEPPTPP) shows a compositional bias: pro residues. Polar residues-rich tracts occupy residues 212–226 (DNSTYTKSDQVNEAC) and 315–326 (DYNQRQESSNAG).

It belongs to the MAP Jupiter family.

It is found in the nucleus. It localises to the cytoplasm. Its subcellular location is the cytoskeleton. The protein localises to the spindle. Its function is as follows. Binds to all microtubule populations. The chain is Microtubule-associated protein Jupiter from Drosophila erecta (Fruit fly).